Reading from the N-terminus, the 509-residue chain is ATP synthase subunit alpha 1 (509 aa).

172-179 (GDRQTGKT) lines the ATP pocket.

Belongs to the ATPase alpha/beta chains family. As to quaternary structure, F-type ATPases have 2 components, CF(1) - the catalytic core - and CF(0) - the membrane proton channel. CF(1) has five subunits: alpha(3), beta(3), gamma(1), delta(1), epsilon(1). CF(0) has four main subunits: a(1), b(1), b'(1) and c(9-12).

Its subcellular location is the cell inner membrane. It catalyses the reaction ATP + H2O + 4 H(+)(in) = ADP + phosphate + 5 H(+)(out). Functionally, produces ATP from ADP in the presence of a proton gradient across the membrane. The alpha chain is a regulatory subunit. In Dinoroseobacter shibae (strain DSM 16493 / NCIMB 14021 / DFL 12), this protein is ATP synthase subunit alpha 1.